Consider the following 336-residue polypeptide: MYYPLVRKALFQLDPERAHELTFRQLKRVSGTPLEFLVRQSVPTKPVSCMGLSFKNPVGLAAGLDKDGECIDALGAMGFGFIEVGTVTPRPQVGNDKPRLFRIVEAEGLINRMGFNNHGVDNLIENVKKSHFGGILGINIGKNKDTPVEQGKEDYLICMDKIYPYAGYIAINISSPNTPGLRSLQYGEALDDLLAAIKDKQTELHQRHHKYVPVAVKIAPDLTEEELIQIADSLVRHNIDGVIATNTTLDRSLIQGLNYCEQAGGLSGRPLQLRSTEVIHRLSQELKGRLPIIGVGGIDSVTAAREKMAAGASLIQIYSGFIFRGPGLIKNIVTHI.

Residues 62-66 and threonine 86 contribute to the FMN site; that span reads AGLDK. Lysine 66 provides a ligand contact to substrate. Substrate is bound at residue 111 to 115; that stretch reads NRMGF. Residues asparagine 139 and asparagine 172 each contribute to the FMN site. Substrate is bound at residue asparagine 172. Serine 175 functions as the Nucleophile in the catalytic mechanism. A substrate-binding site is contributed by asparagine 177. 2 residues coordinate FMN: lysine 217 and threonine 245. A substrate-binding site is contributed by 246-247; the sequence is NT. FMN-binding positions include glycine 268, glycine 297, and 318 to 319; that span reads YS.

This sequence belongs to the dihydroorotate dehydrogenase family. Type 2 subfamily. Monomer. It depends on FMN as a cofactor.

It localises to the cell membrane. It carries out the reaction (S)-dihydroorotate + a quinone = orotate + a quinol. The protein operates within pyrimidine metabolism; UMP biosynthesis via de novo pathway; orotate from (S)-dihydroorotate (quinone route): step 1/1. In terms of biological role, catalyzes the conversion of dihydroorotate to orotate with quinone as electron acceptor. This is Dihydroorotate dehydrogenase (quinone) from Yersinia pseudotuberculosis serotype O:1b (strain IP 31758).